The sequence spans 55 residues: MIDKKLLEILVCPLTKEKLEYNKDTNELISQKAKLAFPIRNGIPIMLVDEARKLE.

Belongs to the UPF0434 family.

This is UPF0434 protein Erum1340/ERWE_CDS_01300 from Ehrlichia ruminantium (strain Welgevonden).